Consider the following 366-residue polypeptide: 2-aminoethylphosphonate--pyruvate transaminase (366 aa).

N6-(pyridoxal phosphate)lysine is present on Lys194.

This sequence belongs to the class-V pyridoxal-phosphate-dependent aminotransferase family. PhnW subfamily. In terms of assembly, homodimer. Pyridoxal 5'-phosphate is required as a cofactor.

It catalyses the reaction (2-aminoethyl)phosphonate + pyruvate = phosphonoacetaldehyde + L-alanine. Its function is as follows. Involved in phosphonate degradation. This Lactiplantibacillus plantarum (strain ATCC BAA-793 / NCIMB 8826 / WCFS1) (Lactobacillus plantarum) protein is 2-aminoethylphosphonate--pyruvate transaminase.